The primary structure comprises 1054 residues: CCAAT/enhancer-binding protein zeta (1054 aa).

Positions 1-20 (MAAVKEPLEFHAKRPWRPEE) are enriched in basic and acidic residues. 2 disordered regions span residues 1–42 (MAAV…GFSL) and 102–160 (VEED…PKVK). The span at 21–34 (AVEDPDEEDEDNTS) shows a compositional bias: acidic residues. The span at 109–120 (EKENSSKKEVKI) shows a compositional bias: basic and acidic residues. Serine 113 is subject to Phosphoserine. The span at 124 to 138 (NNKNTAESQRTSVNK) shows a compositional bias: polar residues. Serine 629 is modified (phosphoserine). At lysine 695 the chain carries N6-acetyllysine. The residue at position 835 (serine 835) is a Phosphoserine. 2 disordered regions span residues 873-902 (RTKG…DEVS) and 915-969 (DEDG…KKRN). 2 stretches are compositionally biased toward acidic residues: residues 882 to 902 (LDED…DEVS) and 915 to 933 (DEDG…ESVP). Residues serine 959, serine 973, and serine 978 each carry the phosphoserine modification. Residues 1031 to 1054 (IIKKKKHFKKKRIKTTQKTKKQRK) form a disordered region.

This sequence belongs to the CBF/MAK21 family.

The protein localises to the nucleus. In terms of biological role, stimulates transcription from the HSP70 promoter. This Homo sapiens (Human) protein is CCAAT/enhancer-binding protein zeta (CEBPZ).